Reading from the N-terminus, the 414-residue chain is WW domain-containing oxidoreductase (414 aa).

The segment at 1–23 (MAALKYAGLEDTDSEEELPPGWE) is disordered. Residues 16–49 (EELPPGWEERTTKDGWVYYANHLEEKTQWEHPKS) enclose the WW 1 domain. Positions 50–55 (GKRKRV) match the Nuclear localization signal motif. A WW 2 domain is found at 57 to 90 (GGLPYGWEQETDENGQVYFVDHINKRTTYLDPRL). 131–137 (GANSGIG) serves as a coordination point for NADP(+). Serine 260 lines the substrate pocket. Tyrosine 293 functions as the Proton acceptor in the catalytic mechanism.

This sequence belongs to the short-chain dehydrogenases/reductases (SDR) family.

Its subcellular location is the cytoplasm. It is found in the mitochondrion. The protein resides in the golgi apparatus. It localises to the lysosome. Its function is as follows. Putative oxidoreductase. Acts as a tumor suppressor and plays a role in apoptosis. May function synergistically with p53/TP53 to control genotoxic stress-induced cell death. Plays a role in TGFB1 signaling and TGFB1-mediated cell death. May also play a role in tumor necrosis factor (TNF)-mediated cell death. Required for normal bone development. Inhibits Wnt signaling. This Gallus gallus (Chicken) protein is WW domain-containing oxidoreductase (WWOX).